Consider the following 663-residue polypeptide: NAD(P)H-quinone oxidoreductase subunit 5, chloroplastic (663 aa).

The next 16 helical transmembrane spans lie at 11-31, 41-61, 89-109, 126-146, 149-169, 189-209, 224-244, 260-280, 292-312, 329-349, 398-418, 436-456, 482-502, 528-548, 607-627, and 635-655; these read WLIP…LISF, LYGL…MNLL, FFID…AVLV, FFAY…SPNL, IYIF…FWFT, FCLL…DFIT, HLYF…AKSA, TPIS…FLVA, IMNL…TIAL, LGYM…FHLV, FTFL…CFWS, IAWI…LLAF, LYML…GFIS, ILLN…AYSI, WLFD…GQSL, and VSSY…FLPL.

Belongs to the complex I subunit 5 family. As to quaternary structure, NDH is composed of at least 16 different subunits, 5 of which are encoded in the nucleus.

It is found in the plastid. The protein localises to the chloroplast thylakoid membrane. The enzyme catalyses a plastoquinone + NADH + (n+1) H(+)(in) = a plastoquinol + NAD(+) + n H(+)(out). It carries out the reaction a plastoquinone + NADPH + (n+1) H(+)(in) = a plastoquinol + NADP(+) + n H(+)(out). Its function is as follows. NDH shuttles electrons from NAD(P)H:plastoquinone, via FMN and iron-sulfur (Fe-S) centers, to quinones in the photosynthetic chain and possibly in a chloroplast respiratory chain. The immediate electron acceptor for the enzyme in this species is believed to be plastoquinone. Couples the redox reaction to proton translocation, and thus conserves the redox energy in a proton gradient. This is NAD(P)H-quinone oxidoreductase subunit 5, chloroplastic (ndhF) from Chara vulgaris (Common stonewort).